A 230-amino-acid polypeptide reads, in one-letter code: 2-phytyl-1,4-naphtoquinone methyltransferase (230 aa).

The protein belongs to the class I-like SAM-binding methyltransferase superfamily. MenG/UbiE family.

It catalyses the reaction demethylphylloquinol + S-adenosyl-L-methionine = phylloquinol + S-adenosyl-L-homocysteine + H(+). It participates in cofactor biosynthesis; phylloquinone biosynthesis. In terms of biological role, methyltransferase required for the conversion of 2-phytyl-1,4-beta-naphthoquinol to phylloquinol. The protein is 2-phytyl-1,4-naphtoquinone methyltransferase of Nostoc punctiforme (strain ATCC 29133 / PCC 73102).